Reading from the N-terminus, the 468-residue chain is Probable Xaa-Pro aminopeptidase PEPP (468 aa).

Mn(2+)-binding residues include Asp-264, Asp-275, Glu-398, and Glu-438.

The protein belongs to the peptidase M24B family. It depends on Mn(2+) as a cofactor.

It carries out the reaction Release of any N-terminal amino acid, including proline, that is linked to proline, even from a dipeptide or tripeptide.. Functionally, catalyzes the removal of a penultimate prolyl residue from the N-termini of peptides. The sequence is that of Probable Xaa-Pro aminopeptidase PEPP (PEPP) from Paracoccidioides brasiliensis (strain Pb18).